The following is a 176-amino-acid chain: Ribosome maturation factor RimM (176 aa).

Positions 97 to 176 constitute a PRC barrel domain; sequence GDEFYWRELV…TIQVDWDPSF (80 aa).

The protein belongs to the RimM family. In terms of assembly, binds ribosomal protein uS19.

The protein resides in the cytoplasm. In terms of biological role, an accessory protein needed during the final step in the assembly of 30S ribosomal subunit, possibly for assembly of the head region. Essential for efficient processing of 16S rRNA. May be needed both before and after RbfA during the maturation of 16S rRNA. It has affinity for free ribosomal 30S subunits but not for 70S ribosomes. This is Ribosome maturation factor RimM from Pseudoalteromonas atlantica (strain T6c / ATCC BAA-1087).